The following is a 115-amino-acid chain: uncharacterized protein (115 aa).

The 115-residue stretch at 1–115 (MGVEISLDPP…ETVIKLSAAE (115 aa)) folds into the MSP domain.

This is an uncharacterized protein from Caenorhabditis elegans.